Consider the following 1265-residue polypeptide: MSPALQDLSQPEGLKKTLRDEINAILQKRIMVLDGGMGTMIQREKLNEEHFRGQEFKDHARPLKGNNDILSITQPDVIYQIHKEYLLAGADIIETNTFSSTSIAQADYGLEHLAYRMNMCSAGVARKAAEEVTLQTGIKRFVAGALGPTNKTLSVSPSVERPDYRNITFDELVEAYQEQAKGLLDGGVDILLIETIFDTANAKAALFALQNLFEEKYAPRPIFISGTIVDKSGRTLSGQTGEGFVISVSHGEPLCIGLNCALGAAEMRPFIEIIGKCTTAYVLCYPNAGLPNTFGDYDETPSMMAKHLKDFAMDGLVNIVGGCCGSTPDHIREIAEAVKNCKPRVPPATAFEGHMLLSGLEPFRIGPYTNFVNIGERCNVAGSRKFAKLIMAGNYEEALCVAKVQVEMGAQVLDVNMDDGMLDGPSAMTRFCNLIASEPDIAKVPLCIDSSNFAVIEAGLKCCQGKCIVNSISLKEGEDDFLEKARKIKKYGAAMVVMAFDEEGQATETDTKIRVCTRAYHLLVKKLGFNPNDIIFDPNILTIGTGMEEHNLYAINFIHATKVIKETLPGARISGGLSNLSFSFRGMEAIREAMHGVFLYHAIKSGMDMGIVNAGNLPVYDDIHKELLQLCEDLIWNKDPEATEKLLRYAQTQGTGGKKVIQTDEWRNGPVEERLEYALVKGIEKHIIEDTEEARLNQKKYPRPLNIIEGPLMNGMKIVGDLFGAGKMFLPQVIKSARVMKKAVGHLIPFMEKEREETRVLNGTVEEEDPYQGTIVLATVKGDVHDIGKNIVGVVLGCNNFRVIDLGVMTPCDKILKAALDHKADIIGLSGLITPSLDEMIFVAKEMERLAIRIPLLIGGATTSKTHTAVKIAPRYSAPVIHVLDASKSVVVCSQLLDENLKDEYFEEIMEEYEDIRQDHYESLKERRYLPLSQARKSGFQMDWLSEPHPVKPTFIGTQVFEDYDLQKLVDYIDWKPFFDVWQLRGKYPNRGFPKIFNDKTVGGEARKVYDDAHNMLNTLISQKKLRARGVVGFWPAQSIQDDIHLYAEAAVPQAAEPIATFYGLRQQAEKDSASTEPYYCLSDFIAPLHSGIRDYLGLFAVACFGVEELSKAYEDDGDDYSSIMVKALGDRLAEAFAEELHERVRRELWAYCGSEQLDVADLRRLRYKGIRPAPGYPSQPDHTEKLTMWRLADIEQSTGIRLTESLAMAPASAVSGLYFSNLKSKYFAVGKISKDQVEDYALRKNISVAEVEKWLGPILGYDTD.

Residues 19 to 338 (RDEINAILQK…DHIREIAEAV (320 aa)) form the Hcy-binding domain. C260, C323, and C324 together coordinate Zn(2+). Residues 371-632 (FVNIGERCNV…IHKELLQLCE (262 aa)) form the Pterin-binding domain. (6S)-5,6,7,8-tetrahydrofolate is bound by residues 382-384 (GSR), D449, N470, D537, N579, R585, and R591. The 98-residue stretch at 662–759 (QTDEWRNGPV…FMEKEREETR (98 aa)) folds into the B12-binding N-terminal domain. Methylcob(III)alamin is bound by residues E709, 782–786 (GDVHD), H785, S830, T834, and A886. Residues 772-907 (QGTIVLATVK…DENLKDEYFE (136 aa)) enclose the B12-binding domain. An AdoMet activation domain is found at 923 to 1265 (SLKERRYLPL…LGPILGYDTD (343 aa)). S-adenosyl-L-methionine-binding positions include D974, R1172, and 1227–1228 (YF). T1264 carries the phosphothreonine modification.

It belongs to the vitamin-B12 dependent methionine synthase family. Monomer. Dimer. Forms a multiprotein complex with MMACHC, MMADHC and MTRR. The cofactor is methylcob(III)alamin. Zn(2+) serves as cofactor. Widely expressed. Expressed at the highest levels in pancreas, heart, brain, skeletal muscle and placenta. Expressed at lower levels in lung, liver and kidney.

It is found in the cytoplasm. It catalyses the reaction (6S)-5-methyl-5,6,7,8-tetrahydrofolate + L-homocysteine = (6S)-5,6,7,8-tetrahydrofolate + L-methionine. Its pathway is amino-acid biosynthesis; L-methionine biosynthesis via de novo pathway; L-methionine from L-homocysteine (MetH route): step 1/1. Functionally, catalyzes the transfer of a methyl group from methylcob(III)alamin (MeCbl) to homocysteine, yielding enzyme-bound cob(I)alamin and methionine in the cytosol. MeCbl is an active form of cobalamin (vitamin B12) used as a cofactor for methionine biosynthesis. Cob(I)alamin form is regenerated to MeCbl by a transfer of a methyl group from 5-methyltetrahydrofolate. The processing of cobalamin in the cytosol occurs in a multiprotein complex composed of at least MMACHC, MMADHC, MTRR (methionine synthase reductase) and MTR which may contribute to shuttle safely and efficiently cobalamin towards MTR in order to produce methionine. This chain is Methionine synthase, found in Homo sapiens (Human).